A 247-amino-acid chain; its full sequence is uncharacterized protein (247 aa).

An N-acetyltransferase domain is found at Ile-70 to Arg-205.

This sequence belongs to the acetyltransferase family.

Its subcellular location is the endoplasmic reticulum. It localises to the golgi apparatus. The protein localises to the vacuole. This is an uncharacterized protein from Schizosaccharomyces pombe (strain 972 / ATCC 24843) (Fission yeast).